Reading from the N-terminus, the 260-residue chain is Tropinone reductase 2 (260 aa).

18–41 (SRGIGYGIVEELASLGASVYTCSR) is an NADP(+) binding site. Ser146 serves as a coordination point for substrate. The Proton acceptor role is filled by Tyr159. Position 192–196 (192–196 (IATSL)) interacts with NADP(+).

This sequence belongs to the short-chain dehydrogenases/reductases (SDR) family. As to quaternary structure, homodimer.

It catalyses the reaction pseudotropine + NADP(+) = tropinone + NADPH + H(+). It functions in the pathway alkaloid biosynthesis; tropane alkaloid biosynthesis. Catalyzes the stereospecific reduction of tropinone to pseudotropine. This chain is Tropinone reductase 2 (TR2), found in Datura stramonium (Jimsonweed).